Consider the following 104-residue polypeptide: Large ribosomal subunit protein uL24 (104 aa).

Belongs to the universal ribosomal protein uL24 family. In terms of assembly, part of the 50S ribosomal subunit.

Functionally, one of two assembly initiator proteins, it binds directly to the 5'-end of the 23S rRNA, where it nucleates assembly of the 50S subunit. Its function is as follows. One of the proteins that surrounds the polypeptide exit tunnel on the outside of the subunit. The polypeptide is Large ribosomal subunit protein uL24 (Brevibacillus brevis (strain 47 / JCM 6285 / NBRC 100599)).